Here is a 2697-residue protein sequence, read N- to C-terminus: Target of rapamycin homolog (2697 aa).

Residues 1–25 are disordered; the sequence is MLQQHGISFQMNADRQNKAATTSNR. 7 HEAT repeats span residues 235–272, 649–687, 689–726, 731–768, 815–853, 863–900, and 1073–1110; these read LRVNLFFKYIFNAVRDKNPAVRIAGIDALHVVLTIVSQ, QTIYGVLRAVCSVIVNDQDVRVRMQVISCFGQMPRPFLA, LAQPEMLEVQFMALHDEKLEMQQACVTLLGRLAELNPA, RLRLMLLETLSQMQQSGQARLEQHSAKMIAQLAKQSPK, KNLKPLFEKLTHMINDSSSLHKREAALRAIGGICRSTAY, SLLDDLLRILKTVMSNTMRREAIKTLGILGAIDPYTHK, and KYTGELIPYLLTVLQTDKTKERVLTVKVMESIQKLTHC. An FAT domain is found at 1438–2153; the sequence is VLGRWAEQTK…IYALTVASRS (716 aa). Disordered stretches follow at residues 1945–1981 and 2017–2039; these read TVISPPQQPQQPKKMHIPPVTRATSPPPPAQKSPQPA and SNSSLPPQHHHVSPLSNDSPSNS. Pro residues predominate over residues 1969–1981; that stretch reads SPPPPAQKSPQPA. Positions 2030-2039 are enriched in polar residues; sequence PLSNDSPSNS. Residues 2332–2647 enclose the PI3K/PI4K catalytic domain; sequence FSSKMNVITS…TTDSIMETIK (316 aa). Positions 2338-2344 are G-loop; the sequence is VITSKQR. The segment at 2512–2520 is catalytic loop; it reads GLGDRHPSN. The tract at residues 2532–2557 is activation loop; that stretch reads HIDFGDCFEVAMLREKFPERVPFRLT. Residues 2615–2635 form a disordered region; that stretch reads DPKTRKDTGGRQNMAGAVLPS. Residues 2665 to 2697 enclose the FATC domain; sequence EPLQVTEQLAMLTEQATSPLNLCQSYIGWCPFW.

The protein belongs to the PI3/PI4-kinase family. Ubiquitous. Expressed in all major tissues and organs, including the intestine, gonads and hypodermal cells. Expressed in neurons.

The protein localises to the nucleus. It carries out the reaction L-seryl-[protein] + ATP = O-phospho-L-seryl-[protein] + ADP + H(+). The catalysed reaction is L-threonyl-[protein] + ATP = O-phospho-L-threonyl-[protein] + ADP + H(+). Its function is as follows. Serine/threonine-protein kinase that regulates the mRNA translation machinery, probably by modulating the activity of translation factors such as eIF-4G and eIF-2. It may have some protein kinase activity instead of lipid kinase activity. May play a role in P-granule degradation by autophagy in somatic cells during embryogenesis. Required, during larval development, for the establishment of the proper number of germline progenitors, probably upstream of rsks-1 and ife-1. Required for larval development. May act as a mediator of lifespan regulation by insulin signaling and nutrient sensing. This Caenorhabditis elegans protein is Target of rapamycin homolog.